Consider the following 145-residue polypeptide: Superoxide dismutase [Mn/Fe] (145 aa).

Residues histidine 10 and histidine 64 each coordinate Fe(3+). Mn(2+) is bound by residues histidine 10 and histidine 64.

The protein belongs to the iron/manganese superoxide dismutase family. Mn(2+) serves as cofactor. Requires Fe(3+) as cofactor.

The catalysed reaction is 2 superoxide + 2 H(+) = H2O2 + O2. Its function is as follows. Destroys superoxide anion radicals which are normally produced within the cells and which are toxic to biological systems. Catalyzes the dismutation of superoxide anion radicals into O2 and H2O2 by successive reduction and oxidation of the transition metal ion at the active site. This chain is Superoxide dismutase [Mn/Fe] (sodA), found in Streptococcus canis.